Here is a 412-residue protein sequence, read N- to C-terminus: Tryptophan synthase beta chain (412 aa).

An N6-(pyridoxal phosphate)lysine modification is found at Lys92.

The protein belongs to the TrpB family. In terms of assembly, tetramer of two alpha and two beta chains. Pyridoxal 5'-phosphate serves as cofactor.

It catalyses the reaction (1S,2R)-1-C-(indol-3-yl)glycerol 3-phosphate + L-serine = D-glyceraldehyde 3-phosphate + L-tryptophan + H2O. The protein operates within amino-acid biosynthesis; L-tryptophan biosynthesis; L-tryptophan from chorismate: step 5/5. The beta subunit is responsible for the synthesis of L-tryptophan from indole and L-serine. The chain is Tryptophan synthase beta chain from Methylibium petroleiphilum (strain ATCC BAA-1232 / LMG 22953 / PM1).